We begin with the raw amino-acid sequence, 447 residues long: MRLKSIITVIALILIMFMSAIESSIISLALPTIKQDLNAGNLISLIFTAYFIALVIANPIVGELLSRFKIIYVAIAGLLLFSIGSFMCGLSTNFTMLIISRVIQGFGSGVLMSLSQIVPKLAFEIPLRYKIMGIVGSVWGISSIIGPLLGGGILEFATWHWLFYINIPIAIIAIILVIWTFHFPEEETVAKSKFDTKGLTLFYVFIGLIMFALLNQQLLLLNFLSFILAIVVAMCLFKVEKHVSSPFLPVVEFNRSITLVFITDLLTAICLMGFNLYIPVYLQEQLGLSPLQSGLVIFPLSVAWITLNFNLHRIEAKLSRKVIYLLSFTLLLVSSIIISFGIKLPVLIAFVLILAGLSFGYIYTKDSVIVQEETSPLQMKKMMSFYGLTKNLGASIGSTIMGYLYAIQSGIFGPNLHNVLSAVAVISIGLIVLWVVFFKEQSSQSKE.

14 consecutive transmembrane segments (helical) span residues 6–26 (IITV…SSII), 42–62 (LISL…PIVG), 70–90 (IIYV…MCGL), 94–114 (FTML…LMSL), 134–154 (IVGS…GGIL), 161–181 (WLFY…IWTF), 194–214 (FDTK…FALL), 217–237 (QLLL…MCLF), 260–280 (VFIT…YIPV), 286–306 (LGLS…AWIT), 323–342 (IYLL…SFGI), 346–363 (VLIA…GYIY), 392–412 (LGAS…SGIF), and 418–438 (NVLS…VVFF).

The protein belongs to the major facilitator superfamily.

Its subcellular location is the cell membrane. Functionally, energy-dependent drug efflux pump that increases resistance to antimicrobial agents such as norfloxacin, acriflavine and ethidium bromide. This is Multidrug efflux pump SdrM from Staphylococcus aureus (strain N315).